The chain runs to 247 residues: Coproheme decarboxylase (247 aa).

Fe-coproporphyrin III is bound by residues arginine 129, 143 to 147, histidine 170, glutamine 183, and serine 221; that span reads YPMDK. Residue tyrosine 143 is part of the active site.

The protein belongs to the ChdC family. Type 1 subfamily. It depends on Fe-coproporphyrin III as a cofactor.

The enzyme catalyses Fe-coproporphyrin III + 2 H2O2 + 2 H(+) = heme b + 2 CO2 + 4 H2O. It carries out the reaction Fe-coproporphyrin III + H2O2 + H(+) = harderoheme III + CO2 + 2 H2O. It catalyses the reaction harderoheme III + H2O2 + H(+) = heme b + CO2 + 2 H2O. It functions in the pathway porphyrin-containing compound metabolism; protoheme biosynthesis. In terms of biological role, involved in coproporphyrin-dependent heme b biosynthesis. Catalyzes the decarboxylation of Fe-coproporphyrin III (coproheme) to heme b (protoheme IX), the last step of the pathway. The reaction occurs in a stepwise manner with a three-propionate intermediate. This Bacillus cereus (strain ATCC 10987 / NRS 248) protein is Coproheme decarboxylase.